The sequence spans 386 residues: Putative F-box/kelch-repeat protein At3g17280 (386 aa).

In terms of domain architecture, F-box spans 1–48 (MTTISDLPYDLLPEILSRLPTKSIPKLKTTCKKWYALFKDPKFVEKKL). Kelch repeat units follow at residues 155–203 (SYKI…LKES) and 340–386 (RIYI…IVEV).

The chain is Putative F-box/kelch-repeat protein At3g17280 from Arabidopsis thaliana (Mouse-ear cress).